We begin with the raw amino-acid sequence, 994 residues long: Alpha-mannosidase F (994 aa).

Residues 1 to 20 form the signal peptide; sequence MKNFYYFILILLFFNEVCYS. Positions 35, 37, and 151 each coordinate Zn(2+). Asp151 acts as the Nucleophile in catalysis. N-linked (GlcNAc...) asparagine glycosylation is found at Asn247 and Asn381. His392 lines the Zn(2+) pocket. N-linked (GlcNAc...) asparagine glycans are attached at residues Asn554, Asn712, and Asn932.

This sequence belongs to the glycosyl hydrolase 38 family. It depends on Zn(2+) as a cofactor.

The protein resides in the secreted. It carries out the reaction Hydrolysis of terminal, non-reducing alpha-D-mannose residues in alpha-D-mannosides.. The sequence is that of Alpha-mannosidase F (manF) from Dictyostelium discoideum (Social amoeba).